The primary structure comprises 448 residues: Phosphoglucosamine mutase (448 aa).

Catalysis depends on S101, which acts as the Phosphoserine intermediate. Residues S101, D242, D244, and D246 each contribute to the Mg(2+) site. Phosphoserine is present on S101.

Belongs to the phosphohexose mutase family. The cofactor is Mg(2+). In terms of processing, activated by phosphorylation.

It carries out the reaction alpha-D-glucosamine 1-phosphate = D-glucosamine 6-phosphate. Its function is as follows. Catalyzes the conversion of glucosamine-6-phosphate to glucosamine-1-phosphate. The polypeptide is Phosphoglucosamine mutase (Afipia carboxidovorans (strain ATCC 49405 / DSM 1227 / KCTC 32145 / OM5) (Oligotropha carboxidovorans)).